A 335-amino-acid chain; its full sequence is Methionine aminopeptidase 1D, mitochondrial (335 aa).

The transit peptide at 1-19 directs the protein to the mitochondrion; that stretch reads MAAPSGVHLLVRRGSHRIF. Residue H161 participates in substrate binding. The a divalent metal cation site is built by D178, D189, and H252. H259 lines the substrate pocket. Positions 284 and 315 each coordinate a divalent metal cation.

This sequence belongs to the peptidase M24A family. Methionine aminopeptidase type 1 subfamily. Co(2+) serves as cofactor. It depends on Zn(2+) as a cofactor. Mn(2+) is required as a cofactor. Requires Fe(2+) as cofactor. Overexpressed in colon cancer cell lines and colon tumors as compared to normal tissues (at protein level).

Its subcellular location is the mitochondrion. The enzyme catalyses Release of N-terminal amino acids, preferentially methionine, from peptides and arylamides.. Functionally, removes the N-terminal methionine from nascent proteins. The N-terminal methionine is often cleaved when the second residue in the primary sequence is small and uncharged (Met-Ala-, Cys, Gly, Pro, Ser, Thr, or Val). Requires deformylation of the N(alpha)-formylated initiator methionine before it can be hydrolyzed. May play a role in colon tumorigenesis. This chain is Methionine aminopeptidase 1D, mitochondrial (METAP1D), found in Homo sapiens (Human).